The following is a 260-amino-acid chain: Snake venom serine protease 2B (260 aa).

Positions 1–18 are cleaved as a signal peptide; it reads MVLIRVLANLLILQLSYA. Positions 19–24 are excised as a propeptide; the sequence is QKSSEL. In terms of domain architecture, Peptidase S1 spans 25-251; it reads VVGGDECNIN…HLDWIQSIIA (227 aa). Intrachain disulfides connect cysteine 31/cysteine 165, cysteine 52/cysteine 68, cysteine 102/cysteine 258, cysteine 144/cysteine 212, cysteine 176/cysteine 191, and cysteine 202/cysteine 227. The active-site Charge relay system is histidine 67. Residues asparagine 101 and asparagine 105 are each glycosylated (N-linked (GlcNAc...) asparagine). Aspartate 112 serves as the catalytic Charge relay system. Residues asparagine 123 and asparagine 156 are each glycosylated (N-linked (GlcNAc...) asparagine). The active-site Charge relay system is the serine 206.

The protein belongs to the peptidase S1 family. Snake venom subfamily. As to quaternary structure, monomer. As to expression, expressed by the venom gland.

It localises to the secreted. Its function is as follows. Snake venom serine protease that may act in the hemostasis system of the prey. The sequence is that of Snake venom serine protease 2B (TLG2B) from Craspedocephalus gramineus (Bamboo pit viper).